A 177-amino-acid polypeptide reads, in one-letter code: von Ebner gland protein 2 (177 aa).

The N-terminal stretch at 1-18 (MKALLLTFSLSLLAALQA) is a signal peptide. C80 and C172 form a disulfide bridge.

It belongs to the calycin superfamily. Lipocalin family. As to quaternary structure, homodimer.

It is found in the secreted. In terms of biological role, could play a role in taste reception. Could be necessary for the concentration and delivery of sapid molecules in the gustatory system. This is von Ebner gland protein 2 (Vegp2) from Rattus norvegicus (Rat).